Consider the following 193-residue polypeptide: Rho-related protein racF2 (193 aa).

10–17 (GDGAVGKT) provides a ligand contact to GTP. The short motif at 32 to 40 (YLPTVFDNY) is the Effector region element. GTP-binding positions include 57-61 (DTAGQ) and 115-118 (TKQD). Cysteine methyl ester is present on Cys-190. The S-geranylgeranyl cysteine moiety is linked to residue Cys-190. Residues 191–193 (TIM) constitute a propeptide, removed in mature form.

Belongs to the small GTPase superfamily. Rho family.

The protein resides in the cell membrane. The protein is Rho-related protein racF2 (racF2) of Dictyostelium discoideum (Social amoeba).